The sequence spans 1235 residues: Ubiquitin carboxyl-terminal hydrolase 40 (1235 aa).

Positions 41 to 482 (SGIRNQGGTC…SAYMLFYRKA (442 aa)) constitute a USP domain. Catalysis depends on cysteine 50, which acts as the Nucleophile. Catalysis depends on histidine 305, which acts as the Proton acceptor.

The protein belongs to the peptidase C19 family.

It catalyses the reaction Thiol-dependent hydrolysis of ester, thioester, amide, peptide and isopeptide bonds formed by the C-terminal Gly of ubiquitin (a 76-residue protein attached to proteins as an intracellular targeting signal).. This is Ubiquitin carboxyl-terminal hydrolase 40 (Usp40) from Mus musculus (Mouse).